Reading from the N-terminus, the 583-residue chain is Estrogen receptor (583 aa).

The segment at 1-138 (MYPEESRGSG…GFEITKNTRF (138 aa)) is modulating. 2 NR C4-type zinc fingers span residues 139–159 (CAVCSDYASGYHYGVWSCEGC) and 175–199 (CPATNQCTIDKNRRKSCQACRLRKC). The nuclear receptor DNA-binding region spans 139 to 204 (CAVCSDYASG…RLRKCYEVGM (66 aa)). Residues 205–265 (MKGGMRKDRG…PGGRSSLNNM (61 aa)) form a hinge region. The segment at 220–263 (EKHGPAQRQTSQNLPTHKASPQDGRKRAMSSSSTSGPGGRSSLN) is disordered. One can recognise an NR LBD domain in the interval 266-501 (PPDQVLLLLQ…DLLLEMLDAH (236 aa)). Residues 506-583 (PVKPSQSWSQ…GSHSDCTRIP (78 aa)) are disordered. Over residues 539–551 (ASSAGSSSGPQGS) the composition is skewed to low complexity.

The protein belongs to the nuclear hormone receptor family. NR3 subfamily. Binds DNA as a homodimer. Can form a heterodimer with ER-beta.

Its subcellular location is the nucleus. The steroid hormones and their receptors are involved in the regulation of eukaryotic gene expression and affect cellular proliferation and differentiation in target tissues. The sequence is that of Estrogen receptor (esr1) from Oreochromis aureus (Israeli tilapia).